The primary structure comprises 195 residues: Antigenic thaumatin-like protein ARB_01183 (195 aa).

The N-terminal stretch at 1 to 22 (MHSNTAVIALSALAALVPAALA) is a signal peptide. 2 cysteine pairs are disulfide-bonded: C125-C153 and C130-C137. The interval 171–195 (GPKKMFKPVQEKAANRPRHPHARPE) is disordered. Residues 185–195 (NRPRHPHARPE) show a composition bias toward basic residues.

The protein belongs to the thaumatin family.

The protein resides in the secreted. In terms of biological role, might be involved in the inhibition of growth of fungal competitors and pathogenicity. This chain is Antigenic thaumatin-like protein ARB_01183, found in Arthroderma benhamiae (strain ATCC MYA-4681 / CBS 112371) (Trichophyton mentagrophytes).